The sequence spans 441 residues: Probable acetylornithine aminotransferase, mitochondrial (441 aa).

Lysine 294 carries the N6-(pyridoxal phosphate)lysine modification.

The protein belongs to the class-III pyridoxal-phosphate-dependent aminotransferase family. It depends on pyridoxal 5'-phosphate as a cofactor.

The protein localises to the mitochondrion matrix. It carries out the reaction N(2)-acetyl-L-ornithine + 2-oxoglutarate = N-acetyl-L-glutamate 5-semialdehyde + L-glutamate. It functions in the pathway amino-acid biosynthesis; L-arginine biosynthesis; N(2)-acetyl-L-ornithine from L-glutamate: step 4/4. This Schizosaccharomyces pombe (strain 972 / ATCC 24843) (Fission yeast) protein is Probable acetylornithine aminotransferase, mitochondrial (arg1).